Consider the following 403-residue polypeptide: Glucosyl-3-phosphoglycerate synthase (403 aa).

Aspartate 150 is an a divalent metal cation binding site. Residue 189–192 (GRVT) participates in (2R)-3-phosphoglycerate binding. Histidine 273 lines the a divalent metal cation pocket.

Belongs to the glycosyltransferase 2 family. As to quaternary structure, homodimer. The cofactor is Mn(2+). Requires Co(2+) as cofactor. Mg(2+) is required as a cofactor. Ni(2+) serves as cofactor.

The enzyme catalyses an NDP-alpha-D-glucose + (2R)-3-phosphoglycerate = (2R)-2-O-(alpha-D-glucopyranosyl)-3-phospho-glycerate + a ribonucleoside 5'-diphosphate + H(+). Its function is as follows. Involved in the biosynthesis of 6-O-methylglucose lipopolysaccarides (MGLPs). Catalyzes the transfer of a glucose (Glc) moiety from uridine diphosphate (UDP-Glc) to the position 2 of 3-phospho-D-glycerate (3-PGA) to form glucosyl-3-phosphoglycerate (GPG). GpgS is most active with UDP-glucose, followed by GDP-glucose, ADP-glucose, and to a lesser extent, TDP-glucose. 3-PGA is the only acceptor for these glucosyl donors. This is Glucosyl-3-phosphoglycerate synthase from Persephonella marina (strain DSM 14350 / EX-H1).